We begin with the raw amino-acid sequence, 410 residues long: Lissencephaly-1 homolog (410 aa).

One can recognise a LisH domain in the interval Q7–D39. Positions T55 to A80 form a coiled coil. 7 WD repeats span residues G104–S143, G146–T185, G188–T227, G230–V269, M294–R333, G336–T375, and A378–N410.

This sequence belongs to the WD repeat LIS1/nudF family.

Its subcellular location is the cytoplasm. It is found in the cytoskeleton. The protein localises to the microtubule organizing center. It localises to the centrosome. Functionally, positively regulates the activity of the minus-end directed microtubule motor protein dynein. May enhance dynein-mediated microtubule sliding by targeting dynein to the microtubule plus end. Required for several dynein- and microtubule-dependent processes. This Monosiga brevicollis (Choanoflagellate) protein is Lissencephaly-1 homolog.